The sequence spans 184 residues: Pupal cuticle protein (184 aa).

Residues 1 to 15 form the signal peptide; sequence MYLLVNFIVALAVLQ. In terms of domain architecture, Chitin-binding type R&amp;R spans 42-103; that stretch reads DGKYRYAYET…PVGAHIPQVP (62 aa). Polar residues predominate over residues 147 to 160; it reads DHTIPQSRPSTTPK. A disordered region spans residues 147-184; sequence DHTIPQSRPSTTPKTIYLTHPPTTTSRPLRQRRALPTH. Over residues 175 to 184 the composition is skewed to basic residues; that stretch reads LRQRRALPTH.

Component of the cuticle of the pupa of fruit fly. The sequence is that of Pupal cuticle protein (Pcp) from Drosophila melanogaster (Fruit fly).